Here is a 640-residue protein sequence, read N- to C-terminus: Threonine--tRNA ligase (640 aa).

Residues 1–61 (MPTITLPDGS…ACDADVTIIT (61 aa)) enclose the TGS domain. The catalytic stretch occupies residues 243 to 534 (DHRKIGKALD…LIEQYAGNMP (292 aa)). Zn(2+) is bound by residues C334, H385, and H511.

It belongs to the class-II aminoacyl-tRNA synthetase family. In terms of assembly, homodimer. Zn(2+) is required as a cofactor.

It is found in the cytoplasm. The catalysed reaction is tRNA(Thr) + L-threonine + ATP = L-threonyl-tRNA(Thr) + AMP + diphosphate + H(+). Its function is as follows. Catalyzes the attachment of threonine to tRNA(Thr) in a two-step reaction: L-threonine is first activated by ATP to form Thr-AMP and then transferred to the acceptor end of tRNA(Thr). Also edits incorrectly charged L-seryl-tRNA(Thr). The protein is Threonine--tRNA ligase of Dichelobacter nodosus (strain VCS1703A).